We begin with the raw amino-acid sequence, 344 residues long: Ubiquitin-associated domain-containing protein 2 (344 aa).

The first 34 residues, 1–34, serve as a signal peptide directing secretion; it reads MFTSTGSNGLYKAPLSKSLLLVPSAISILLTLLF. Over 35–91 the chain is Extracellular; the sequence is QHYQKFFAYNLQAIKEDFQIWRLVCGRVICLDLKDTFCSSLLIYNFRIFERRYGSRK. A helical membrane pass occupies residues 92-111; it reads FSSFLLGAWTLSALFDLLLV. Over 112–123 the chain is Cytoplasmic; it reads EAAQYVFGITIN. A helical transmembrane segment spans residues 124-142; it reads SLPSGFLGPVFALFVPFYC. The Extracellular portion of the chain corresponds to 143 to 162; it reads SIPRVQVTQVLGYFSITNKT. Residue N160 is glycosylated (N-linked (GlcNAc...) asparagine). A helical membrane pass occupies residues 163-183; sequence LVYILGLQLLTSGSYIWILAL. Residues 184-344 lie on the Cytoplasmic side of the membrane; that stretch reads SGLISGICYN…NVATNFLLQH (161 aa). Residues 284-307 form a disordered region; it reads RHNENYQDHHPSDQDTPPPTEVSE. Residues 286–296 are compositionally biased toward basic and acidic residues; it reads NENYQDHHPSD. A UBA domain is found at 304–344; that stretch reads EVSEEQVARLMEMGFSRGDALEALRASNNDLNVATNFLLQH.

The protein resides in the endoplasmic reticulum membrane. Restricts trafficking of FAF2 from the endoplasmic reticulum to lipid droplets. May negatively regulate the canonical Wnt signaling pathway in the lymphocytes. This chain is Ubiquitin-associated domain-containing protein 2 (UBAC2), found in Gallus gallus (Chicken).